Here is a 298-residue protein sequence, read N- to C-terminus: Lipoyl synthase (298 aa).

Positions 40, 45, 51, 67, 71, 74, and 280 each coordinate [4Fe-4S] cluster. The Radical SAM core domain maps to 53–269 (AVRKTATFMI…KEIALSKGFS (217 aa)).

This sequence belongs to the radical SAM superfamily. Lipoyl synthase family. Requires [4Fe-4S] cluster as cofactor.

The protein localises to the cytoplasm. The catalysed reaction is [[Fe-S] cluster scaffold protein carrying a second [4Fe-4S](2+) cluster] + N(6)-octanoyl-L-lysyl-[protein] + 2 oxidized [2Fe-2S]-[ferredoxin] + 2 S-adenosyl-L-methionine + 4 H(+) = [[Fe-S] cluster scaffold protein] + N(6)-[(R)-dihydrolipoyl]-L-lysyl-[protein] + 4 Fe(3+) + 2 hydrogen sulfide + 2 5'-deoxyadenosine + 2 L-methionine + 2 reduced [2Fe-2S]-[ferredoxin]. Its pathway is protein modification; protein lipoylation via endogenous pathway; protein N(6)-(lipoyl)lysine from octanoyl-[acyl-carrier-protein]. Functionally, catalyzes the radical-mediated insertion of two sulfur atoms into the C-6 and C-8 positions of the octanoyl moiety bound to the lipoyl domains of lipoate-dependent enzymes, thereby converting the octanoylated domains into lipoylated derivatives. The protein is Lipoyl synthase of Bacillus cereus (strain G9842).